We begin with the raw amino-acid sequence, 150 residues long: MRCPFCGYEDTFVIDTREIEDQRVIRRRRECPNCKNRFTTYERIEEKPIMVIKKDGRREPFDRNKLLAGLQRAVVKRNIDNEKLEAIIDEIIANIRKQGISEITSKEIGKMVLEKLKDLDAVAYVRFASVYQEFSSLEEFAKLLSQMKKE.

Residues 3–34 (CPFCGYEDTFVIDTREIEDQRVIRRRRECPNC) fold into a zinc finger. An ATP-cone domain is found at 49-139 (IMVIKKDGRR…VYQEFSSLEE (91 aa)).

It belongs to the NrdR family. Zn(2+) is required as a cofactor.

Its function is as follows. Negatively regulates transcription of bacterial ribonucleotide reductase nrd genes and operons by binding to NrdR-boxes. The chain is Transcriptional repressor NrdR from Dictyoglomus thermophilum (strain ATCC 35947 / DSM 3960 / H-6-12).